The primary structure comprises 303 residues: Glycine--tRNA ligase alpha subunit (303 aa).

The protein belongs to the class-II aminoacyl-tRNA synthetase family. In terms of assembly, tetramer of two alpha and two beta subunits.

It localises to the cytoplasm. The catalysed reaction is tRNA(Gly) + glycine + ATP = glycyl-tRNA(Gly) + AMP + diphosphate. This is Glycine--tRNA ligase alpha subunit from Klebsiella pneumoniae (strain 342).